Consider the following 570-residue polypeptide: Urease subunit alpha (570 aa).

The 440-residue stretch at Gly-131 to Phe-570 folds into the Urease domain. Residues His-136, His-138, and Lys-219 each coordinate Ni(2+). An N6-carboxylysine modification is found at Lys-219. Residue His-221 participates in substrate binding. The Ni(2+) site is built by His-248 and His-274. The Proton donor role is filled by His-322. Position 362 (Asp-362) interacts with Ni(2+).

The protein belongs to the metallo-dependent hydrolases superfamily. Urease alpha subunit family. Heterotrimer of UreA (gamma), UreB (beta) and UreC (alpha) subunits. Three heterotrimers associate to form the active enzyme. Ni cation serves as cofactor. In terms of processing, carboxylation allows a single lysine to coordinate two nickel ions.

It localises to the cytoplasm. It catalyses the reaction urea + 2 H2O + H(+) = hydrogencarbonate + 2 NH4(+). Its pathway is nitrogen metabolism; urea degradation; CO(2) and NH(3) from urea (urease route): step 1/1. This Trichodesmium erythraeum (strain IMS101) protein is Urease subunit alpha.